The following is a 185-amino-acid chain: MKLKKDKRREAIRQQIDSNPFITDHELSDLFQVSIQTIRLDRTYLNIPELRKRIKLVAEKNYDQISSIEEQEFIGDLIQVNPNVKAQSILDITSDSVFHKTGIARGHVLFAQANSLCVALIKQPTVLTHESSIQFIEKVKLNDTVRAEARVVNQTAKHYYVEVKSYVKHTLVFKGNFKMFYDKRG.

The protein belongs to the FapR family.

Its function is as follows. Transcriptional factor involved in regulation of membrane lipid biosynthesis by repressing genes involved in fatty acid and phospholipid metabolism. This Staphylococcus aureus (strain Mu3 / ATCC 700698) protein is Transcription factor FapR.